A 618-amino-acid polypeptide reads, in one-letter code: Proline--tRNA ligase (618 aa).

This sequence belongs to the class-II aminoacyl-tRNA synthetase family. ProS type 1 subfamily. Homodimer.

Its subcellular location is the cytoplasm. It catalyses the reaction tRNA(Pro) + L-proline + ATP = L-prolyl-tRNA(Pro) + AMP + diphosphate. In terms of biological role, catalyzes the attachment of proline to tRNA(Pro) in a two-step reaction: proline is first activated by ATP to form Pro-AMP and then transferred to the acceptor end of tRNA(Pro). As ProRS can inadvertently accommodate and process non-cognate amino acids such as alanine and cysteine, to avoid such errors it has two additional distinct editing activities against alanine. One activity is designated as 'pretransfer' editing and involves the tRNA(Pro)-independent hydrolysis of activated Ala-AMP. The other activity is designated 'posttransfer' editing and involves deacylation of mischarged Ala-tRNA(Pro). The misacylated Cys-tRNA(Pro) is not edited by ProRS. The chain is Proline--tRNA ligase from Streptococcus pyogenes serotype M2 (strain MGAS10270).